We begin with the raw amino-acid sequence, 129 residues long: Methylmalonyl-CoA decarboxylase subunit gamma (129 aa).

2 stretches are compositionally biased toward low complexity: residues 24–39 and 49–58; these read APAA…APAP and PAAAAAPVPA. A disordered region spans residues 24–58; it reads APAAAPKAAPAAAPAPKAAPAPAPAPAAAAAPVPA. The region spanning 51-129 is the Biotinyl-binding domain; that stretch reads AAAAPVPAGA…STGDDMVVLG (79 aa). At Lys-95 the chain carries N6-biotinyllysine.

The methylmalonyl-CoA decarboxylase is composed of five subunits: the carboxyltransferase alpha subunit (MmdA), the tunnel beta subunit (MmdB), the biotin-containing gamma subunit (MmdC), and the delta (MmdD) and epsilon (MmdE) subunits. It depends on biotin as a cofactor.

The protein resides in the cell membrane. The catalysed reaction is (S)-methylmalonyl-CoA + Na(+)(in) + H(+)(out) = propanoyl-CoA + Na(+)(out) + CO2. With respect to regulation, completely inhibited by avidin. Functionally, biotin-containing subunit of the sodium ion pump methylmalonyl-CoA decarboxylase, which converts the chemical energy of a decarboxylation reaction into an electrochemical gradient of Na(+) ions across the cytoplasmic membrane, thereby creating a sodium ion motive force that is used for ATP synthesis. Can also convert malonyl-CoA into acetyl-CoA. The protein is Methylmalonyl-CoA decarboxylase subunit gamma of Veillonella parvula (Staphylococcus parvulus).